The following is a 408-amino-acid chain: NADH-quinone oxidoreductase subunit D (408 aa).

It belongs to the complex I 49 kDa subunit family. NDH-1 is composed of 14 different subunits. Subunits NuoB, C, D, E, F, and G constitute the peripheral sector of the complex.

The protein localises to the cell inner membrane. The enzyme catalyses a quinone + NADH + 5 H(+)(in) = a quinol + NAD(+) + 4 H(+)(out). Its function is as follows. NDH-1 shuttles electrons from NADH, via FMN and iron-sulfur (Fe-S) centers, to quinones in the respiratory chain. The immediate electron acceptor for the enzyme in this species is believed to be ubiquinone. Couples the redox reaction to proton translocation (for every two electrons transferred, four hydrogen ions are translocated across the cytoplasmic membrane), and thus conserves the redox energy in a proton gradient. The protein is NADH-quinone oxidoreductase subunit D of Campylobacter jejuni subsp. jejuni serotype O:2 (strain ATCC 700819 / NCTC 11168).